Consider the following 351-residue polypeptide: Translation initiation factor eIF2B subunit beta (351 aa).

Belongs to the eIF-2B alpha/beta/delta subunits family. As to quaternary structure, component of the translation initiation factor 2B (eIF2B) complex which is a heterodecamer of two sets of five different subunits: alpha, beta, gamma, delta and epsilon. Subunits alpha, beta and delta comprise a regulatory subcomplex and subunits epsilon and gamma comprise a catalytic subcomplex. Within the complex, the hexameric regulatory complex resides at the center, with the two heterodimeric catalytic subcomplexes bound on opposite sides.

The protein resides in the cytoplasm. Its subcellular location is the cytosol. Its activity is regulated as follows. Activated by the chemical integrated stress response (ISR) inhibitor ISRIB which stimulates guanine nucleotide exchange factor activity for both phosphorylated and unphosphorylated eIF2. Functionally, acts as a component of the translation initiation factor 2B (eIF2B) complex, which catalyzes the exchange of GDP for GTP on eukaryotic initiation factor 2 (eIF2) gamma subunit. Its guanine nucleotide exchange factor activity is repressed when bound to eIF2 complex phosphorylated on the alpha subunit, thereby limiting the amount of methionyl-initiator methionine tRNA available to the ribosome and consequently global translation is repressed. This chain is Translation initiation factor eIF2B subunit beta (EIF2B2), found in Bos taurus (Bovine).